Consider the following 158-residue polypeptide: MLSPKRVKFRKQQRGRMRGVATRGNTIAFGQFALQAQECGWITSRQIEASRRAMTRYVKRGGKIWIRIFPDKPVTMRAAETRMGSGKGNPEFWVAVIKPGRILFEMGGDEITPEIAKEAMRLAQYKLPVKTKFIQLDEQEKSAGAKAPAASEAITVES.

The protein belongs to the universal ribosomal protein uL16 family. In terms of assembly, part of the 50S ribosomal subunit.

Binds 23S rRNA and is also seen to make contacts with the A and possibly P site tRNAs. The sequence is that of Large ribosomal subunit protein uL16 from Synechococcus sp. (strain CC9605).